Reading from the N-terminus, the 234-residue chain is Bromodomain-containing protein DDB_G0271118 (234 aa).

The Bromo domain maps to 1–60 (MDLGTIKGELDNNGYSTIKDFTADVRLMFENALTYNADSSPIWKHAKTLLYFHRKHDEHV). A compositionally biased stretch (low complexity) spans 134–194 (NNNSNNNNNN…SSSSSSSSSS (61 aa)). The interval 134 to 209 (NNNSNNNNNN…KKYSDEERRN (76 aa)) is disordered.

The chain is Bromodomain-containing protein DDB_G0271118 from Dictyostelium discoideum (Social amoeba).